An 834-amino-acid chain; its full sequence is MEPRVRTVCFLFFLLRVLAEPAKNSDFYLPGDYLLGGLFTLHANMKGTVHLNFLQVPMCKEYEVKLSGYNLMQAMRFAVEEINNDSSLLPDVRLGYEMVDVCYVSNNVQPVLYFLAQEDNLLPIQEDYSNYVPRVVAVIGPENSESVTTVANFLSLFLLPQITYSAISDQLRDKQRFPALLRTTPSAKHHIEAMVQLMLHFRWNWISVLVSSDTYGRDNGQLLGDRLAGGDICIAFQETLPTLQPNQDMMPEDRQRLVSIVEKLQQSTARVVVVFSPDLTLYDFFREVLRQNFTGAVWIASESWAIDPVLHNLTGLHRTGTFLGITLQNVPIPGFNEFRVRGPQAGPTHQRSTCNQECDTCLNSTLSFNTILRLSGERVVYSVYSAVYAVAHALHSLLGCDHSACTKRGVYPWQLLEEIWKVNFSLLDHQIFFDPQGDVALHLEIVQWQWDLSQNPFQSVASYQPLQGHLKDIQDISWHTVNNTIPVSMCSKRCQSGQKKKPVGIHTCCFECIDCPPGTFLNQTANEYDCQACPSNEWSHQSETSCFKRRLSFLEWHEAATIAVALLAALGFLSTLAILVIFWRHFETPMVRSAGGPMCFLMLTLLLVAYMVVPVYVGLPKVSTCLCRQALFPVCFTICISCIAVRSFQIVCVFKMASRFPRAYSYWVRYQGSYVSVAFITALKMVTVVISLLATGLNPTTRTDTDDPKIMIISCNPNYRNSLLFNTSLDLLLSVAGFSFAYMGKELPTNYNEAKFITFSMTFYFTSSVSLCTFMSVYDGVLVTIVDLLVTVFNLLAISLGYFGPKCYMILFYPERNTPAYFNSMIQGYTMRRD.

Residues 1 to 19 (MEPRVRTVCFLFFLLRVLA) form the signal peptide. At 20–561 (EPAKNSDFYL…SFLEWHEAAT (542 aa)) the chain is on the extracellular side. N-linked (GlcNAc...) asparagine glycans are attached at residues N84, N292, N312, N363, N423, N482, and N522. Residues 562-582 (IAVALLAALGFLSTLAILVIF) traverse the membrane as a helical segment. Residues 583-597 (WRHFETPMVRSAGGP) are Cytoplasmic-facing. The chain crosses the membrane as a helical span at residues 598–618 (MCFLMLTLLLVAYMVVPVYVG). At 619–630 (LPKVSTCLCRQA) the chain is on the extracellular side. The helical transmembrane segment at 631–651 (LFPVCFTICISCIAVRSFQIV) threads the bilayer. Over 652–676 (CVFKMASRFPRAYSYWVRYQGSYVS) the chain is Cytoplasmic. Residues 677–697 (VAFITALKMVTVVISLLATGL) form a helical membrane-spanning segment. Topologically, residues 698 to 722 (NPTTRTDTDDPKIMIISCNPNYRNS) are extracellular. Residues 723–743 (LLFNTSLDLLLSVAGFSFAYM) traverse the membrane as a helical segment. The Cytoplasmic portion of the chain corresponds to 744-755 (GKELPTNYNEAK). Residues 756–776 (FITFSMTFYFTSSVSLCTFMS) form a helical membrane-spanning segment. Topologically, residues 777-779 (VYD) are extracellular. The helical transmembrane segment at 780-800 (GVLVTIVDLLVTVFNLLAISL) threads the bilayer. The Cytoplasmic portion of the chain corresponds to 801–834 (GYFGPKCYMILFYPERNTPAYFNSMIQGYTMRRD).

It belongs to the G-protein coupled receptor 3 family. TAS1R subfamily. As to quaternary structure, forms heterodimers with TAS1R3.

It is found in the cell membrane. Functionally, putative taste receptor. TAS1R2/TAS1R3 recognizes diverse natural and synthetic sweeteners. This Saimiri sciureus (Common squirrel monkey) protein is Taste receptor type 1 member 2 (TAS1R2).